A 173-amino-acid chain; its full sequence is Large ribosomal subunit protein uL10 (173 aa).

Belongs to the universal ribosomal protein uL10 family. Part of the ribosomal stalk of the 50S ribosomal subunit. The N-terminus interacts with L11 and the large rRNA to form the base of the stalk. The C-terminus forms an elongated spine to which L12 dimers bind in a sequential fashion forming a multimeric L10(L12)X complex.

Its function is as follows. Forms part of the ribosomal stalk, playing a central role in the interaction of the ribosome with GTP-bound translation factors. The sequence is that of Large ribosomal subunit protein uL10 from Acidithiobacillus ferrooxidans (strain ATCC 23270 / DSM 14882 / CIP 104768 / NCIMB 8455) (Ferrobacillus ferrooxidans (strain ATCC 23270)).